Here is a 464-residue protein sequence, read N- to C-terminus: Forkhead box protein N3 (464 aa).

Disordered stretches follow at residues 1-53 (MGPI…EKGG) and 85-108 (PVQD…DAKQ). The span at 14–30 (TGISVSSQCYRSSTLSN) shows a compositional bias: polar residues. The segment at residues 113-209 (KPPYSFSCLI…QALKKTPYHP (97 aa)) is a DNA-binding region (fork-head). Disordered regions lie at residues 294 to 337 (MESE…SSSA) and 381 to 428 (LVES…MKEA). Low complexity predominate over residues 316–336 (SSAKSANKRSSSPSDSISSSS). A compositionally biased stretch (basic residues) spans 389–401 (QHKKKQHLLKLRR).

The protein localises to the nucleus. In terms of biological role, acts as a transcriptional repressor. May be involved in DNA damage-inducible cell cycle arrests (checkpoints). The sequence is that of Forkhead box protein N3 from Xenopus tropicalis (Western clawed frog).